An 866-amino-acid polypeptide reads, in one-letter code: DNA replication licensing factor MCM4 (866 aa).

Disordered stretches follow at residues 1 to 67 (MSSP…TSPA), 81 to 107 (SPLN…TPLR), and 124 to 145 (GGGS…PVSE). Polar residues-rich tracts occupy residues 47–63 (DNIS…SLPA) and 81–93 (SPLN…SMGS). Phosphoserine occurs at positions 55 and 81. Thr-87 is modified (phosphothreonine). The 210-residue stretch at 460 to 669 (IYDRLARAIA…FDKRLASHLV (210 aa)) folds into the MCM domain. Residue 512 to 519 (GDPGTSKS) participates in ATP binding. The short motif at 644-647 (SRFD) is the Arginine finger element.

It belongs to the MCM family. As to quaternary structure, component of the Mcm2-7 complex. The complex forms a toroidal hexameric ring with the proposed subunit order Mcm2-Mcm6-Mcm4-Mcm7-Mcm3-Mcm5. In terms of processing, phosphorylated by the catalytic component of the Dbf4-dependent kinase (DDK) complex Cdc7.

It is found in the nucleus. The catalysed reaction is ATP + H2O = ADP + phosphate + H(+). Acts as a component of the Mcm2-7 complex (Mcm complex) which is the putative replicative helicase essential for 'once per cell cycle' DNA replication initiation and elongation in eukaryotic cells. The active ATPase sites in the Mcm2-7 ring are formed through the interaction surfaces of two neighboring subunits such that a critical structure of a conserved arginine finger motif is provided in trans relative to the ATP-binding site of the Walker A box of the adjacent subunit. The six ATPase active sites, however, are likely to contribute differentially to the complex helicase activity. Required for DNA replication and cell proliferation. Essential role in mitotic DNA replication but not in endoreplication. The polypeptide is DNA replication licensing factor MCM4 (dpa) (Drosophila melanogaster (Fruit fly)).